Reading from the N-terminus, the 347-residue chain is Inosamine-phosphate amidinotransferase 1 (347 aa).

Residues Asp179 and His227 contribute to the active site. Catalysis depends on Cys332, which acts as the Amidino-cysteine intermediate.

Belongs to the amidinotransferase family. Homodimer.

The enzyme catalyses 1-amino-1-deoxy-scyllo-inositol 4-phosphate + L-arginine = 1-guanidino-1-deoxy-scyllo-inositol 4-phosphate + L-ornithine. The protein operates within antibiotic biosynthesis; streptomycin biosynthesis. Its function is as follows. Catalyzes two non-consecutive transamidination reactions. It converts scyllo-inosamine 4-phosphate into N-amidino-scyllo-inosamine 4-phosphate and N1-amidinostreptamine 6-phosphate into streptidine 6-phosphate. The chain is Inosamine-phosphate amidinotransferase 1 (strB1) from Streptomyces griseus.